The following is a 462-amino-acid chain: Cytochrome P450 20A1 (462 aa).

Residues 4–24 (FAIFAVTFLLALVGAVLYLYP) traverse the membrane as a helical segment. A heme-binding site is contributed by cysteine 409.

It belongs to the cytochrome P450 family. The cofactor is heme.

Its subcellular location is the membrane. This Rattus norvegicus (Rat) protein is Cytochrome P450 20A1 (Cyp20a1).